Reading from the N-terminus, the 53-residue chain is Tryptophan RNA-binding attenuator protein inhibitory protein (53 aa).

CXXCXGXG motif repeat units follow at residues 12-19 (CPKCERAG) and 26-33 (CPACSGKG).

Homopentamer or homohexamer.

It localises to the cytoplasm. Its function is as follows. By forming a complex with tryptophan-activated TRAP, and masking its RNA binding site, it inhibits TRAP's RNA binding ability, thereby abolishing TRAP regulation of gene expression, leading to antitermination and increased trp operon expression. AT acts by competing with messenger RNA for the RNA binding domain of TRAP. In Bacillus subtilis (strain 168), this protein is Tryptophan RNA-binding attenuator protein inhibitory protein (rtpA).